A 366-amino-acid polypeptide reads, in one-letter code: tRNA/tmRNA (uracil-C(5))-methyltransferase (366 aa).

Positions 190, 218, 223, 239, and 299 each coordinate S-adenosyl-L-methionine. Cys324 serves as the catalytic Nucleophile. Glu358 serves as the catalytic Proton acceptor.

The protein belongs to the class I-like SAM-binding methyltransferase superfamily. RNA M5U methyltransferase family. TrmA subfamily.

The enzyme catalyses uridine(54) in tRNA + S-adenosyl-L-methionine = 5-methyluridine(54) in tRNA + S-adenosyl-L-homocysteine + H(+). It catalyses the reaction uridine(341) in tmRNA + S-adenosyl-L-methionine = 5-methyluridine(341) in tmRNA + S-adenosyl-L-homocysteine + H(+). Functionally, dual-specificity methyltransferase that catalyzes the formation of 5-methyluridine at position 54 (m5U54) in all tRNAs, and that of position 341 (m5U341) in tmRNA (transfer-mRNA). The sequence is that of tRNA/tmRNA (uracil-C(5))-methyltransferase from Klebsiella pneumoniae subsp. pneumoniae (strain ATCC 700721 / MGH 78578).